The chain runs to 282 residues: tRNA uridine(34) hydroxylase (282 aa).

A Rhodanese domain is found at D128 to Y222. Catalysis depends on C182, which acts as the Cysteine persulfide intermediate.

It belongs to the TrhO family.

The catalysed reaction is uridine(34) in tRNA + AH2 + O2 = 5-hydroxyuridine(34) in tRNA + A + H2O. In terms of biological role, catalyzes oxygen-dependent 5-hydroxyuridine (ho5U) modification at position 34 in tRNAs. The polypeptide is tRNA uridine(34) hydroxylase (Ralstonia nicotianae (strain ATCC BAA-1114 / GMI1000) (Ralstonia solanacearum)).